The following is a 379-amino-acid chain: Queuine tRNA-ribosyltransferase (379 aa).

The active-site Proton acceptor is the aspartate 94. Residues 94-98, aspartate 148, glutamine 191, and glycine 218 each bind substrate; that span reads DSGGF. The tract at residues 249–255 is RNA binding; sequence GVGSPDS. Aspartate 268 acts as the Nucleophile in catalysis. The RNA binding; important for wobble base 34 recognition stretch occupies residues 273 to 277; that stretch reads TRIAR. The Zn(2+) site is built by cysteine 306, cysteine 308, cysteine 311, and histidine 337.

Belongs to the queuine tRNA-ribosyltransferase family. In terms of assembly, homodimer. Within each dimer, one monomer is responsible for RNA recognition and catalysis, while the other monomer binds to the replacement base PreQ1. It depends on Zn(2+) as a cofactor.

It catalyses the reaction 7-aminomethyl-7-carbaguanine + guanosine(34) in tRNA = 7-aminomethyl-7-carbaguanosine(34) in tRNA + guanine. Its pathway is tRNA modification; tRNA-queuosine biosynthesis. Functionally, catalyzes the base-exchange of a guanine (G) residue with the queuine precursor 7-aminomethyl-7-deazaguanine (PreQ1) at position 34 (anticodon wobble position) in tRNAs with GU(N) anticodons (tRNA-Asp, -Asn, -His and -Tyr). Catalysis occurs through a double-displacement mechanism. The nucleophile active site attacks the C1' of nucleotide 34 to detach the guanine base from the RNA, forming a covalent enzyme-RNA intermediate. The proton acceptor active site deprotonates the incoming PreQ1, allowing a nucleophilic attack on the C1' of the ribose to form the product. After dissociation, two additional enzymatic reactions on the tRNA convert PreQ1 to queuine (Q), resulting in the hypermodified nucleoside queuosine (7-(((4,5-cis-dihydroxy-2-cyclopenten-1-yl)amino)methyl)-7-deazaguanosine). In Listeria monocytogenes serotype 4a (strain HCC23), this protein is Queuine tRNA-ribosyltransferase.